We begin with the raw amino-acid sequence, 395 residues long: MSDREEKLAAAKQRLLEVKKKKRQAKSKNSVAEDNVDRESNDGNNQVNEPTGNDNTQVVENTEDISASNVVSAEGAEASTGDASTQSPETSENVVKNSVDESVAEKPEKEDLAVIESEDKAAKPDGEIKKNVETEVTSRSTSSQEKDELEKQVKTLHDLNEQKDKKIKELKERINDLTYDYETLKANADDSEGKQTLVSKREAALEEFQSKLLIRENEINKRELKMNGKEDDLKKREKDLENRLLKVEEHEKSLNERATKLSEANENFNNRFKEFEEREKSAIKQNKEQSSEGSKTANQTHEQKELINSLEKKVSDIALEKQLLEEAVERYKLAMVEFAECQRRLKELEAMHFEQPGSVTEKLFPDPTNFEVIDNVSIDLTLTGFPGAHGIPFSV.

2 disordered regions span residues 17–155 (EVKK…QVKT) and 276–304 (EERE…HEQK). Polar residues-rich tracts occupy residues 42-71 (DGNN…SNVV) and 81-96 (GDAS…NVVK). Residues 103–133 (VAEKPEKEDLAVIESEDKAAKPDGEIKKNVE) show a composition bias toward basic and acidic residues. Positions 134-143 (TEVTSRSTSS) are enriched in low complexity. Composition is skewed to basic and acidic residues over residues 144 to 155 (QEKDELEKQVKT) and 276 to 290 (EERE…KEQS). The stretch at 224 to 351 (LKMNGKEDDL…QRRLKELEAM (128 aa)) forms a coiled coil. Positions 291–300 (SEGSKTANQT) are enriched in polar residues.

It localises to the cytoplasm. This is an uncharacterized protein from Schizosaccharomyces pombe (strain 972 / ATCC 24843) (Fission yeast).